Consider the following 505-residue polypeptide: ATP-dependent RNA helicase HAS1 (505 aa).

Residues 1–37 (MATPSNKRSRDSESTEEPVVDEKSTSKQNNAAPEGEQ) form a disordered region. At Ser-12 the chain carries Phosphoserine. Residues 26–37 (SKQNNAAPEGEQ) are compositionally biased toward polar residues. Residues 42-70 (EKFEELKLSQPTLKAIEKMGFTTMTSVQA) carry the Q motif motif. In terms of domain architecture, Helicase ATP-binding spans 73–249 (IPPLLAGRDV…RISLRPGPLF (177 aa)). 86–93 (AKTGSGKT) contributes to the ATP binding site. Positions 196–199 (DEAD) match the DEAD box motif. Residues 263–433 (GLEQGYVVCD…NVQSQLEKLI (171 aa)) enclose the Helicase C-terminal domain. The Bipartite nuclear localization signal signature appears at 275–291 (KRFLLLFSFLKRNQKKK).

It belongs to the DEAD box helicase family. DDX18/HAS1 subfamily. In terms of assembly, interacts with RRP1. Associates in the nucleolus with the 60S and pre-60S ribosomal subunits. It has also been isolated with the nuclear pore complex. Phosphorylated by CDK1.

The protein localises to the nucleus. It is found in the nucleolus. It carries out the reaction ATP + H2O = ADP + phosphate + H(+). Functionally, ATP-dependent RNA helicase involved in 40S ribosomal subunit biogenesis. Required for the processing and cleavage of 35S pre-rRNA at sites A0, A1, and A2, leading to mature 18S rRNA. This is ATP-dependent RNA helicase HAS1 (HAS1) from Saccharomyces cerevisiae (strain ATCC 204508 / S288c) (Baker's yeast).